The sequence spans 94 residues: Small ribosomal subunit protein bS18 (94 aa).

The protein belongs to the bacterial ribosomal protein bS18 family. As to quaternary structure, part of the 30S ribosomal subunit. Forms a tight heterodimer with protein bS6.

Binds as a heterodimer with protein bS6 to the central domain of the 16S rRNA, where it helps stabilize the platform of the 30S subunit. The sequence is that of Small ribosomal subunit protein bS18 from Polaromonas sp. (strain JS666 / ATCC BAA-500).